The sequence spans 606 residues: Elongation factor 4 (606 aa).

Positions 7 to 189 constitute a tr-type G domain; the sequence is SRIRNFCIIA…AVVDRVPPPK (183 aa). GTP contacts are provided by residues 19–24 and 136–139; these read DHGKST and NKID.

The protein belongs to the TRAFAC class translation factor GTPase superfamily. Classic translation factor GTPase family. LepA subfamily.

Its subcellular location is the cell inner membrane. It catalyses the reaction GTP + H2O = GDP + phosphate + H(+). Its function is as follows. Required for accurate and efficient protein synthesis under certain stress conditions. May act as a fidelity factor of the translation reaction, by catalyzing a one-codon backward translocation of tRNAs on improperly translocated ribosomes. Back-translocation proceeds from a post-translocation (POST) complex to a pre-translocation (PRE) complex, thus giving elongation factor G a second chance to translocate the tRNAs correctly. Binds to ribosomes in a GTP-dependent manner. The polypeptide is Elongation factor 4 (Parasynechococcus marenigrum (strain WH8102)).